The chain runs to 858 residues: Leucine--tRNA ligase (858 aa).

The short motif at 53-63 (PYPSGNLHMGH) is the 'HIGH' region element. The short motif at 622 to 626 (KMSKS) is the 'KMSKS' region element. Lysine 625 contacts ATP.

Belongs to the class-I aminoacyl-tRNA synthetase family.

It localises to the cytoplasm. It carries out the reaction tRNA(Leu) + L-leucine + ATP = L-leucyl-tRNA(Leu) + AMP + diphosphate. This is Leucine--tRNA ligase from Prochlorococcus marinus subsp. pastoris (strain CCMP1986 / NIES-2087 / MED4).